Reading from the N-terminus, the 559-residue chain is Membrane protein insertase YidC (559 aa).

The chain crosses the membrane as a helical span at residues 7 to 24; it reads ILWVIFSMSLVLLYDNWQ. 2 stretches are compositionally biased toward low complexity: residues 45–55 and 63–82; these read APAASGAAAQG and QPAT…QAAA. Residues 45–82 are disordered; the sequence is APAASGAAAQGDVPKANVQPATGTSAAPAAGAAPQAAA. The next 5 helical transmembrane spans lie at 338–358, 364–384, 434–454, 472–492, and 507–527; these read LELV…FWLL, FLGN…LVFF, LGGC…YWVL, LSVP…MFVQ, and VMMI…AGLV.

Belongs to the OXA1/ALB3/YidC family. Type 1 subfamily. As to quaternary structure, interacts with the Sec translocase complex via SecD. Specifically interacts with transmembrane segments of nascent integral membrane proteins during membrane integration.

The protein localises to the cell inner membrane. Required for the insertion and/or proper folding and/or complex formation of integral membrane proteins into the membrane. Involved in integration of membrane proteins that insert both dependently and independently of the Sec translocase complex, as well as at least some lipoproteins. Aids folding of multispanning membrane proteins. The chain is Membrane protein insertase YidC from Cupriavidus taiwanensis (strain DSM 17343 / BCRC 17206 / CCUG 44338 / CIP 107171 / LMG 19424 / R1) (Ralstonia taiwanensis (strain LMG 19424)).